The sequence spans 921 residues: Isoleucine--tRNA ligase (921 aa).

Residues 57-67 carry the 'HIGH' region motif; it reads PYANGDIHMGH. An L-isoleucyl-5'-AMP-binding site is contributed by glutamate 552. The short motif at 593 to 597 is the 'KMSKS' region element; the sequence is KMSKS. Residue lysine 596 participates in ATP binding. Residues cysteine 887, cysteine 890, cysteine 907, and cysteine 910 each coordinate Zn(2+).

Belongs to the class-I aminoacyl-tRNA synthetase family. IleS type 1 subfamily. Monomer. Zn(2+) serves as cofactor.

It is found in the cytoplasm. It carries out the reaction tRNA(Ile) + L-isoleucine + ATP = L-isoleucyl-tRNA(Ile) + AMP + diphosphate. Its function is as follows. Catalyzes the attachment of isoleucine to tRNA(Ile). As IleRS can inadvertently accommodate and process structurally similar amino acids such as valine, to avoid such errors it has two additional distinct tRNA(Ile)-dependent editing activities. One activity is designated as 'pretransfer' editing and involves the hydrolysis of activated Val-AMP. The other activity is designated 'posttransfer' editing and involves deacylation of mischarged Val-tRNA(Ile). This Halalkalibacterium halodurans (strain ATCC BAA-125 / DSM 18197 / FERM 7344 / JCM 9153 / C-125) (Bacillus halodurans) protein is Isoleucine--tRNA ligase.